Reading from the N-terminus, the 377-residue chain is Chaperone protein DnaJ (377 aa).

The J domain maps to 5 to 70 (DFYEVLGVDR…EKRSAYDRMG (66 aa)). A CR-type zinc finger spans residues 136–214 (GCKKEISFTA…CHGTGVKDKS (79 aa)). Residues Cys149, Cys152, Cys166, Cys169, Cys188, Cys191, Cys202, and Cys205 each coordinate Zn(2+). CXXCXGXG motif repeat units follow at residues 149–156 (CETCDGKG), 166–173 (CSTCGGHG), 188–195 (CPNCGGSG), and 202–209 (CNDCHGTG). The disordered stretch occupies residues 353-377 (LDGDSKHHQSPKKKSFFEKLGDLFD). The span at 367–377 (SFFEKLGDLFD) shows a compositional bias: basic and acidic residues.

It belongs to the DnaJ family. In terms of assembly, homodimer. Zn(2+) is required as a cofactor.

It localises to the cytoplasm. In terms of biological role, participates actively in the response to hyperosmotic and heat shock by preventing the aggregation of stress-denatured proteins and by disaggregating proteins, also in an autonomous, DnaK-independent fashion. Unfolded proteins bind initially to DnaJ; upon interaction with the DnaJ-bound protein, DnaK hydrolyzes its bound ATP, resulting in the formation of a stable complex. GrpE releases ADP from DnaK; ATP binding to DnaK triggers the release of the substrate protein, thus completing the reaction cycle. Several rounds of ATP-dependent interactions between DnaJ, DnaK and GrpE are required for fully efficient folding. Also involved, together with DnaK and GrpE, in the DNA replication of plasmids through activation of initiation proteins. The chain is Chaperone protein DnaJ from Psychrobacter sp. (strain PRwf-1).